An 85-amino-acid chain; its full sequence is Cell division topological specificity factor (85 aa).

Belongs to the MinE family.

Its function is as follows. Prevents the cell division inhibition by proteins MinC and MinD at internal division sites while permitting inhibition at polar sites. This ensures cell division at the proper site by restricting the formation of a division septum at the midpoint of the long axis of the cell. The sequence is that of Cell division topological specificity factor from Shewanella baltica (strain OS223).